The chain runs to 72 residues: Conotoxin Ep11.1 (72 aa).

The signal sequence occupies residues 1 to 19 (MKLCVTFLLILVILPSVTG). The propeptide occupies 20 to 32 (EKSSKRTLSGAAL). Cystine bridges form between C39–C53, C46–C58, C52–C63, and C57–C70.

It belongs to the conotoxin I1 superfamily. Expressed by the venom duct.

It localises to the secreted. This Conus episcopatus (Bishop's cone) protein is Conotoxin Ep11.1.